A 425-amino-acid chain; its full sequence is Sucrose-phosphatase 2 (425 aa).

Belongs to the sucrose phosphatase family. In terms of assembly, homodimer. Requires Mg(2+) as cofactor.

It catalyses the reaction sucrose 6(F)-phosphate + H2O = sucrose + phosphate. It functions in the pathway glycan biosynthesis; sucrose biosynthesis; sucrose from D-fructose 6-phosphate and UDP-alpha-D-glucose: step 2/2. Inhibited by EDTA. Functionally, catalyzes the final step of sucrose synthesis. This is Sucrose-phosphatase 2 (SPP2) from Nicotiana tabacum (Common tobacco).